We begin with the raw amino-acid sequence, 127 residues long: Fluoride-specific ion channel FluC (127 aa).

The next 4 helical transmembrane spans lie at 4–24, 35–55, 71–91, and 103–123; these read LLLA…LLSM, LGTL…FAWF, TGFC…VFLL, and VFVN…LFSA. Na(+) contacts are provided by G75 and T78.

Belongs to the fluoride channel Fluc/FEX (TC 1.A.43) family.

The protein resides in the cell inner membrane. The enzyme catalyses fluoride(in) = fluoride(out). With respect to regulation, na(+) is not transported, but it plays an essential structural role and its presence is essential for fluoride channel function. Fluoride-specific ion channel. Important for reducing fluoride concentration in the cell, thus reducing its toxicity. The chain is Fluoride-specific ion channel FluC from Escherichia coli O17:K52:H18 (strain UMN026 / ExPEC).